We begin with the raw amino-acid sequence, 210 residues long: Probable GTP-binding protein EngB (210 aa).

The EngB-type G domain maps to 25–199 (TGIEVAFAGR…RQKLDSWFNE (175 aa)). Residues 33–40 (GRSNAGKS), 60–64 (GRTQL), 78–81 (DLPG), 145–148 (TKAD), and 178–180 (FSS) contribute to the GTP site. 2 residues coordinate Mg(2+): S40 and T62.

This sequence belongs to the TRAFAC class TrmE-Era-EngA-EngB-Septin-like GTPase superfamily. EngB GTPase family. Requires Mg(2+) as cofactor.

Its function is as follows. Necessary for normal cell division and for the maintenance of normal septation. The protein is Probable GTP-binding protein EngB of Klebsiella pneumoniae (strain 342).